Consider the following 147-residue polypeptide: NADH-quinone oxidoreductase subunit A (147 aa).

3 consecutive transmembrane segments (helical) span residues I11–L31, L68–V88, and L93–A113.

This sequence belongs to the complex I subunit 3 family. NDH-1 is composed of 14 different subunits. Subunits NuoA, H, J, K, L, M, N constitute the membrane sector of the complex.

The protein localises to the cell inner membrane. It carries out the reaction a quinone + NADH + 5 H(+)(in) = a quinol + NAD(+) + 4 H(+)(out). In terms of biological role, NDH-1 shuttles electrons from NADH, via FMN and iron-sulfur (Fe-S) centers, to quinones in the respiratory chain. The immediate electron acceptor for the enzyme in this species is believed to be ubiquinone. Couples the redox reaction to proton translocation (for every two electrons transferred, four hydrogen ions are translocated across the cytoplasmic membrane), and thus conserves the redox energy in a proton gradient. This Nitrosospira multiformis (strain ATCC 25196 / NCIMB 11849 / C 71) protein is NADH-quinone oxidoreductase subunit A.